An 83-amino-acid polypeptide reads, in one-letter code: uncharacterized protein (83 aa).

A helical transmembrane segment spans residues 50 to 70; sequence IMVFLGEAWIILIPFAIFCII.

Belongs to the plectrovirus ORF7 family.

It is found in the host membrane. This is an uncharacterized protein from Spiroplasma melliferum (SpV1).